Consider the following 448-residue polypeptide: Asparagine--tRNA ligase (448 aa).

This sequence belongs to the class-II aminoacyl-tRNA synthetase family. Homodimer.

It localises to the cytoplasm. It carries out the reaction tRNA(Asn) + L-asparagine + ATP = L-asparaginyl-tRNA(Asn) + AMP + diphosphate + H(+). The protein is Asparagine--tRNA ligase of Streptococcus sanguinis (strain SK36).